Here is a 264-residue protein sequence, read N- to C-terminus: Apolipoprotein A-I (264 aa).

The N-terminal stretch at 1–18 (MRGVLVTLAVLFLTGTQA) is a signal peptide. A run of 2 repeats spans residues 67–88 (LKLADNLDTLSAAAAKLREDMA) and 89–110 (PYYKEVREMWLKDTEALRAELT). The segment at 67-264 (LKLADNLDTL…FLDELQKSVA (198 aa)) is 10 X approximate tandem repeats. The 3; half-length repeat unit spans residues 111-121 (KDLEEVKEKIR). A run of 5 repeats spans residues 122–143 (PFLDQFSAKWTEELEQYRQRLT), 144–165 (PVAQELKELTKQKVELMQAKLT), 166–187 (PVAEEARDRLRGHVEELRKNLA), 188–209 (PYSDELRQKLSQKLEEIREKGI), and 210–231 (PQASEYQAKVMEQLSNLREKMT). Residues 232-242 (PLVQEFRERLT) form a 9; half-length repeat. Copy 10 of the repeat occupies 243 to 264 (PYAENLKNRLISFLDELQKSVA).

Belongs to the apolipoprotein A1/A4/E family. As to quaternary structure, homodimer. Major protein of plasma HDL, also found in chylomicrons.

The protein resides in the secreted. Its function is as follows. Participates in the reverse transport of cholesterol from tissues to the liver for excretion by promoting cholesterol efflux from tissues and by acting as a cofactor for the lecithin cholesterol acyltransferase (LCAT). This Gallus gallus (Chicken) protein is Apolipoprotein A-I (APOA1).